The chain runs to 119 residues: NAD(P)H-quinone oxidoreductase subunit M (119 aa).

It belongs to the complex I NdhM subunit family. As to quaternary structure, NDH-1 can be composed of about 15 different subunits; different subcomplexes with different compositions have been identified which probably have different functions.

It is found in the cellular thylakoid membrane. The enzyme catalyses a plastoquinone + NADH + (n+1) H(+)(in) = a plastoquinol + NAD(+) + n H(+)(out). It catalyses the reaction a plastoquinone + NADPH + (n+1) H(+)(in) = a plastoquinol + NADP(+) + n H(+)(out). NDH-1 shuttles electrons from an unknown electron donor, via FMN and iron-sulfur (Fe-S) centers, to quinones in the respiratory and/or the photosynthetic chain. The immediate electron acceptor for the enzyme in this species is believed to be plastoquinone. Couples the redox reaction to proton translocation, and thus conserves the redox energy in a proton gradient. Cyanobacterial NDH-1 also plays a role in inorganic carbon-concentration. This is NAD(P)H-quinone oxidoreductase subunit M from Picosynechococcus sp. (strain ATCC 27264 / PCC 7002 / PR-6) (Agmenellum quadruplicatum).